Here is a 68-residue protein sequence, read N- to C-terminus: uncharacterized protein (68 aa).

One can recognise an HMA domain in the interval 2–67; the sequence is KTITLNIKGI…VIEDAGFDAT (66 aa). 2 residues coordinate a metal cation: C13 and C16.

This is an uncharacterized protein from Haemophilus influenzae (strain ATCC 51907 / DSM 11121 / KW20 / Rd).